Consider the following 188-residue polypeptide: Ribosome-recycling factor (188 aa).

This sequence belongs to the RRF family.

The protein localises to the cytoplasm. In terms of biological role, responsible for the release of ribosomes from messenger RNA at the termination of protein biosynthesis. May increase the efficiency of translation by recycling ribosomes from one round of translation to another. The chain is Ribosome-recycling factor from Blochmanniella floridana.